The sequence spans 229 residues: RNA pyrophosphohydrolase (229 aa).

The region spanning 6–149 (GFRPNVGIIL…KRGVYEMALT (144 aa)) is the Nudix hydrolase domain. A Nudix box motif is present at residues 38–59 (GGIDRGETPEQAMFRELHEEVG). The tract at residues 168-229 (SGMRPREAHE…QVLHPDPGKA (62 aa)) is disordered.

It belongs to the Nudix hydrolase family. RppH subfamily. A divalent metal cation serves as cofactor.

Its function is as follows. Accelerates the degradation of transcripts by removing pyrophosphate from the 5'-end of triphosphorylated RNA, leading to a more labile monophosphorylated state that can stimulate subsequent ribonuclease cleavage. The polypeptide is RNA pyrophosphohydrolase (Delftia acidovorans (strain DSM 14801 / SPH-1)).